We begin with the raw amino-acid sequence, 149 residues long: UPF0178 protein Sama_3557 (149 aa).

This sequence belongs to the UPF0178 family.

The chain is UPF0178 protein Sama_3557 from Shewanella amazonensis (strain ATCC BAA-1098 / SB2B).